The following is a 406-amino-acid chain: Tyrosine--tRNA ligase (406 aa).

An L-tyrosine-binding site is contributed by tyrosine 35. The 'HIGH' region motif lies at 40–49 (PTADSLHVGH). L-tyrosine-binding residues include tyrosine 168 and glutamine 172. The 'KMSKS' region signature appears at 228–232 (KMGKT). An ATP-binding site is contributed by lysine 231. The S4 RNA-binding domain maps to 340-404 (LPILDVMAST…RGKKNYNKIE (65 aa)).

The protein belongs to the class-I aminoacyl-tRNA synthetase family. TyrS type 1 subfamily. As to quaternary structure, homodimer.

Its subcellular location is the cytoplasm. The catalysed reaction is tRNA(Tyr) + L-tyrosine + ATP = L-tyrosyl-tRNA(Tyr) + AMP + diphosphate + H(+). Functionally, catalyzes the attachment of tyrosine to tRNA(Tyr) in a two-step reaction: tyrosine is first activated by ATP to form Tyr-AMP and then transferred to the acceptor end of tRNA(Tyr). The polypeptide is Tyrosine--tRNA ligase (Clostridium beijerinckii (strain ATCC 51743 / NCIMB 8052) (Clostridium acetobutylicum)).